The sequence spans 1289 residues: uncharacterized protein (1289 aa).

The N-terminal stretch at 1–23 (MRKYTVIASILLSFLSVLSGGHH) is a signal peptide. The LTD domain occupies 141 to 277 (EGYQADLAHI…VVISTNTGKD (137 aa)).

This is an uncharacterized protein from Bacillus subtilis (strain 168).